A 321-amino-acid chain; its full sequence is NADH-ubiquinone oxidoreductase chain 1 (321 aa).

The next 8 helical transmembrane spans lie at 2–22 (LVML…VAFL), 71–91 (ALFI…WMFI), 104–124 (LLVI…SGWA), 148–168 (LGLI…QAFI), 173–193 (HTWF…STLA), 224–244 (LFFL…AIMF), 255–275 (ILPI…FLWI), and 295–315 (FLPL…SLGG).

This sequence belongs to the complex I subunit 1 family.

The protein resides in the mitochondrion inner membrane. It carries out the reaction a ubiquinone + NADH + 5 H(+)(in) = a ubiquinol + NAD(+) + 4 H(+)(out). Functionally, core subunit of the mitochondrial membrane respiratory chain NADH dehydrogenase (Complex I) that is believed to belong to the minimal assembly required for catalysis. Complex I functions in the transfer of electrons from NADH to the respiratory chain. The immediate electron acceptor for the enzyme is believed to be ubiquinone. The polypeptide is NADH-ubiquinone oxidoreductase chain 1 (MT-ND1) (Lampetra fluviatilis (European river lamprey)).